A 362-amino-acid chain; its full sequence is Ferredoxin--NADP reductase, leaf isozyme 1, chloroplastic (362 aa).

A chloroplast-targeting transit peptide spans 1 to 36 (MAAVTAAAVSTSAAAAVTKASPSPAHCFLPCPPRTR). An FAD-binding FR-type domain is found at 83-205 (KEPYVGKCLL…TGPVGKEMLM (123 aa)). FAD-binding positions include 141–144 (RLYS), 162–164 (CVK), Y168, 179–181 (VCS), and T220. Residues S144 and K164 each coordinate NADP(+). Cysteines 180 and 185 form a disulfide. Position 181 is a phosphoserine (S181). Residues T220, 252-253 (VP), 282-283 (SR), K292, 321-322 (GL), and E360 contribute to the NADP(+) site.

This sequence belongs to the ferredoxin--NADP reductase type 1 family. As to quaternary structure, heterodimer with LFNR2. Component of high molecular weight thylakoid LFNRs-containing protein complexes containing LIR1, LFNR1, LFNR2, TIC62 and TROL proteins. Interacts directly with LFNR1 and LFNR2; LIR1 increases the affinity of LFNR1 and LFNR2 for TIC62 and subsequent thylakoid relocalization. It depends on FAD as a cofactor. May form interchain disulfide bonds with LIR1.

Its subcellular location is the plastid. The protein resides in the chloroplast stroma. It localises to the chloroplast thylakoid membrane. It catalyses the reaction 2 reduced [2Fe-2S]-[ferredoxin] + NADP(+) + H(+) = 2 oxidized [2Fe-2S]-[ferredoxin] + NADPH. It participates in energy metabolism; photosynthesis. Its function is as follows. Plays a key role in regulating the relative amounts of cyclic and non-cyclic electron flow to meet the demands of the plant for ATP and reducing power. In Oryza sativa subsp. indica (Rice), this protein is Ferredoxin--NADP reductase, leaf isozyme 1, chloroplastic.